The chain runs to 571 residues: Proline--tRNA ligase (571 aa).

Belongs to the class-II aminoacyl-tRNA synthetase family. ProS type 1 subfamily. Homodimer.

The protein localises to the cytoplasm. It catalyses the reaction tRNA(Pro) + L-proline + ATP = L-prolyl-tRNA(Pro) + AMP + diphosphate. Catalyzes the attachment of proline to tRNA(Pro) in a two-step reaction: proline is first activated by ATP to form Pro-AMP and then transferred to the acceptor end of tRNA(Pro). As ProRS can inadvertently accommodate and process non-cognate amino acids such as alanine and cysteine, to avoid such errors it has two additional distinct editing activities against alanine. One activity is designated as 'pretransfer' editing and involves the tRNA(Pro)-independent hydrolysis of activated Ala-AMP. The other activity is designated 'posttransfer' editing and involves deacylation of mischarged Ala-tRNA(Pro). The misacylated Cys-tRNA(Pro) is not edited by ProRS. The polypeptide is Proline--tRNA ligase (Stutzerimonas stutzeri (strain A1501) (Pseudomonas stutzeri)).